Here is a 105-residue protein sequence, read N- to C-terminus: Pyrimidine/purine nucleoside phosphorylase (105 aa).

It belongs to the nucleoside phosphorylase PpnP family.

It carries out the reaction a purine D-ribonucleoside + phosphate = a purine nucleobase + alpha-D-ribose 1-phosphate. The enzyme catalyses adenosine + phosphate = alpha-D-ribose 1-phosphate + adenine. It catalyses the reaction cytidine + phosphate = cytosine + alpha-D-ribose 1-phosphate. The catalysed reaction is guanosine + phosphate = alpha-D-ribose 1-phosphate + guanine. It carries out the reaction inosine + phosphate = alpha-D-ribose 1-phosphate + hypoxanthine. The enzyme catalyses thymidine + phosphate = 2-deoxy-alpha-D-ribose 1-phosphate + thymine. It catalyses the reaction uridine + phosphate = alpha-D-ribose 1-phosphate + uracil. The catalysed reaction is xanthosine + phosphate = alpha-D-ribose 1-phosphate + xanthine. Catalyzes the phosphorolysis of diverse nucleosides, yielding D-ribose 1-phosphate and the respective free bases. Can use uridine, adenosine, guanosine, cytidine, thymidine, inosine and xanthosine as substrates. Also catalyzes the reverse reactions. The sequence is that of Pyrimidine/purine nucleoside phosphorylase from Clostridioides difficile (strain 630) (Peptoclostridium difficile).